The primary structure comprises 286 residues: Pyridoxal kinase PdxY (286 aa).

Substrate-binding positions include S9 and 44–45 (MQ). D111, E147, and K180 together coordinate ATP. Residue D221 participates in substrate binding.

This sequence belongs to the pyridoxine kinase family. PdxY subfamily. Homodimer. The cofactor is Mg(2+).

It carries out the reaction pyridoxal + ATP = pyridoxal 5'-phosphate + ADP + H(+). The protein operates within cofactor metabolism; pyridoxal 5'-phosphate salvage; pyridoxal 5'-phosphate from pyridoxal: step 1/1. Pyridoxal kinase involved in the salvage pathway of pyridoxal 5'-phosphate (PLP). Catalyzes the phosphorylation of pyridoxal to PLP. The protein is Pyridoxal kinase PdxY of Burkholderia orbicola (strain AU 1054).